A 430-amino-acid polypeptide reads, in one-letter code: Histidine--tRNA ligase (430 aa).

This sequence belongs to the class-II aminoacyl-tRNA synthetase family. As to quaternary structure, homodimer.

It is found in the cytoplasm. It catalyses the reaction tRNA(His) + L-histidine + ATP = L-histidyl-tRNA(His) + AMP + diphosphate + H(+). The chain is Histidine--tRNA ligase from Anaplasma marginale (strain St. Maries).